Consider the following 290-residue polypeptide: Protein-lysine methyltransferase METTL21E (290 aa).

Residues W96, 124–126, D145, W176, and A197 each bind S-adenosyl-L-methionine; that span reads GAG.

The protein belongs to the methyltransferase superfamily. METTL21 family.

In terms of biological role, protein-lysine methyltransferase. This is Protein-lysine methyltransferase METTL21E (METTL21E) from Bos taurus (Bovine).